The sequence spans 486 residues: Hydrogenobyrinate a,c-diamide synthase (486 aa).

Residues 254–272 (SPPPPLPVPSPGAAPPDPL) show a composition bias toward pro residues. The interval 254–284 (SPPPPLPVPSPGAAPPDPLVRPGRPRPQAPD) is disordered. The GATase cobBQ-type domain occupies 289-474 (RVAMASGAAF…LHTHWAAEPG (186 aa)). C372 serves as the catalytic Nucleophile.

It belongs to the CobB/CbiA family. Mg(2+) is required as a cofactor.

It carries out the reaction hydrogenobyrinate + 2 L-glutamine + 2 ATP + 2 H2O = hydrogenobyrinate a,c-diamide + 2 L-glutamate + 2 ADP + 2 phosphate + 2 H(+). It participates in cofactor biosynthesis; adenosylcobalamin biosynthesis; cob(II)yrinate a,c-diamide from precorrin-2 (aerobic route): step 9/10. Catalyzes the ATP-dependent amidation of the two carboxylate groups at positions a and c of hydrogenobyrinate, using either L-glutamine or ammonia as the nitrogen source. The polypeptide is Hydrogenobyrinate a,c-diamide synthase (Streptomyces coelicolor (strain ATCC BAA-471 / A3(2) / M145)).